A 330-amino-acid chain; its full sequence is Beta-ketoacyl-[acyl-carrier-protein] synthase III (330 aa).

Active-site residues include cysteine 116 and histidine 257. Residues glutamine 258 to arginine 262 are ACP-binding. Residue asparagine 287 is part of the active site.

The protein belongs to the thiolase-like superfamily. FabH family. In terms of assembly, homodimer.

It is found in the cytoplasm. The enzyme catalyses malonyl-[ACP] + acetyl-CoA + H(+) = 3-oxobutanoyl-[ACP] + CO2 + CoA. The protein operates within lipid metabolism; fatty acid biosynthesis. Its function is as follows. Catalyzes the condensation reaction of fatty acid synthesis by the addition to an acyl acceptor of two carbons from malonyl-ACP. Catalyzes the first condensation reaction which initiates fatty acid synthesis and may therefore play a role in governing the total rate of fatty acid production. Possesses both acetoacetyl-ACP synthase and acetyl transacylase activities. Its substrate specificity determines the biosynthesis of branched-chain and/or straight-chain of fatty acids. This Synechocystis sp. (strain ATCC 27184 / PCC 6803 / Kazusa) protein is Beta-ketoacyl-[acyl-carrier-protein] synthase III.